The chain runs to 1414 residues: Phenyloxazoline synthase MbtB (1414 aa).

Residues 5-78 (TACSEIIRAE…AWSQLVSAGT (74 aa)) enclose the Carrier 1 domain. Serine 39 carries the O-(pantetheine 4'-phosphoryl)serine modification. The tract at residues 96–394 (EGEPFPLAPM…SSLLLDVDLT (299 aa)) is condensation/cyclization. The tract at residues 579 to 975 (SYAQLRDQAS…RLPGVHAAAA (397 aa)) is adenylation. Residues 1057-1135 (APRTVLQRAL…ALAQLLTGRE (79 aa)) form the Carrier 2 domain. Serine 1094 bears the O-(pantetheine 4'-phosphoryl)serine mark. The interval 1188–1413 (GAVLVFPHAG…AVARMVSADV (226 aa)) is thioesterase.

Belongs to the ATP-dependent AMP-binding enzyme family. MbtB subfamily. Pantetheine 4'-phosphate is required as a cofactor. 4'-phosphopantetheine is transferred from CoA to a specific serine in each of the two carrier protein domains, leading to their activation from apo to holo forms.

Its pathway is siderophore biosynthesis; mycobactin biosynthesis. Functionally, involved in the initial steps of the mycobactin biosynthetic pathway. Putatively couples activated salicylic acid with serine or threonine and cyclizes this precursor to the hydroxyphenyloxazoline ring system present in this class of siderophores. This chain is Phenyloxazoline synthase MbtB (mbtB), found in Mycobacterium bovis (strain ATCC BAA-935 / AF2122/97).